The following is a 126-amino-acid chain: MPEPAKSAPAPKKGSKKAVTKAQKKDGKKRKRSRKESYSVYVYKVLKQVHPDTGISSKAMGIMNSFVNDIFERIAGEASRLAHYNKRSTITSREIQTAVRLLLPGELAKHAVSEGTKAVTKYTSSK.

The segment covering 1–12 (MPEPAKSAPAPK) has biased composition (low complexity). The tract at residues 1-36 (MPEPAKSAPAPKKGSKKAVTKAQKKDGKKRKRSRKE) is disordered. P2 carries the N-acetylproline modification. E3 bears the ADP-ribosyl glutamic acid mark. At K6 the chain carries N6-(2-hydroxyisobutyryl)lysine; alternate. At K6 the chain carries N6-(beta-hydroxybutyryl)lysine; alternate. K6 is modified (N6-acetyllysine; alternate). K6 bears the N6-butyryllysine; alternate mark. K6 is subject to N6-crotonyllysine; alternate. The residue at position 6 (K6) is an N6-lactoyllysine; alternate. K6 is covalently cross-linked (Glycyl lysine isopeptide (Lys-Gly) (interchain with G-Cter in SUMO2); alternate). ADP-ribosylserine is present on S7. N6-(beta-hydroxybutyryl)lysine; alternate is present on K12. K12 and K13 each carry N6-acetyllysine; alternate. Residues K12 and K13 each carry the N6-crotonyllysine; alternate modification. K12 carries the N6-lactoyllysine; alternate modification. An N6-(2-hydroxyisobutyryl)lysine; alternate modification is found at K13. At S15 the chain carries Phosphoserine; by STK4/MST1. 4 positions are modified to N6-acetyllysine; alternate: K16, K17, K21, and K24. An N6-crotonyllysine; alternate mark is found at K16, K17, K21, and K24. 4 positions are modified to N6-lactoyllysine; alternate: K16, K17, K21, and K24. The residue at position 17 (K17) is an N6-glutaryllysine; alternate. 2 positions are modified to N6-(2-hydroxyisobutyryl)lysine; alternate: K21 and K24. K21 is modified (N6-(beta-hydroxybutyryl)lysine; alternate). K21 bears the N6-butyryllysine; alternate mark. Residue K21 forms a Glycyl lysine isopeptide (Lys-Gly) (interchain with G-Cter in SUMO2); alternate linkage. K25 is subject to N6-(2-hydroxyisobutyryl)lysine. K35 carries the post-translational modification N6-(2-hydroxyisobutyryl)lysine; alternate. K35 carries the post-translational modification N6-(beta-hydroxybutyryl)lysine; alternate. K35 is subject to N6-crotonyllysine; alternate. The residue at position 35 (K35) is an N6-glutaryllysine; alternate. K35 carries the N6-succinyllysine; alternate modification. A Glycyl lysine isopeptide (Lys-Gly) (interchain with G-Cter in ubiquitin); alternate cross-link involves residue K35. E36 carries the polyADP-ribosyl glutamic acid modification. Phosphoserine; by AMPK is present on S37. N6-(2-hydroxyisobutyryl)lysine; alternate is present on residues K44, K47, and K58. An N6-lactoyllysine; alternate modification is found at K44. Residues K44 and K47 each carry the N6-glutaryllysine; alternate modification. K47 is modified (N6-methyllysine; alternate). K58 is subject to N6,N6-dimethyllysine; alternate. Dimethylated arginine is present on R80. K86 carries the post-translational modification N6-(2-hydroxyisobutyryl)lysine; alternate. N6-acetyllysine; alternate is present on K86. An N6-lactoyllysine; alternate modification is found at K86. K86 bears the N6,N6,N6-trimethyllysine; alternate mark. Residues R87 and R93 each carry the omega-N-methylarginine modification. K109 bears the N6-(2-hydroxyisobutyryl)lysine; alternate mark. Position 109 is an N6-(beta-hydroxybutyryl)lysine; alternate (K109). K109 is modified (N6-lactoyllysine; alternate). Position 109 is an N6-glutaryllysine; alternate (K109). The residue at position 109 (K109) is an N6-methyllysine; alternate. A glycan (O-linked (GlcNAc) serine) is linked at S113. Residue T116 is modified to Phosphothreonine. N6-(2-hydroxyisobutyryl)lysine; alternate is present on residues K117 and K121. Position 117 is an N6-(beta-hydroxybutyryl)lysine; alternate (K117). An N6-lactoyllysine; alternate mark is found at K117 and K121. An N6-glutaryllysine; alternate mark is found at K117 and K121. An N6-succinyllysine; alternate mark is found at K117 and K121. N6-methylated lysine; alternate is present on K117. A Glycyl lysine isopeptide (Lys-Gly) (interchain with G-Cter in ubiquitin); alternate cross-link involves residue K121.

The protein belongs to the histone H2B family. The nucleosome is a histone octamer containing two molecules each of H2A, H2B, H3 and H4 assembled in one H3-H4 heterotetramer and two H2A-H2B heterodimers. The octamer wraps approximately 147 bp of DNA. Interacts with VRK1; the interaction is mediated by the nucleosome acidic patch, a cluster of negatively charged residues of H2A and H2B forming a cleft within the nucleosome core. Post-translationally, monoubiquitination at Lys-35 (H2BK34Ub) by the MSL1/MSL2 dimer is required for histone H3 'Lys-4' (H3K4me) and 'Lys-79' (H3K79me) methylation and transcription activation at specific gene loci, such as HOXA9 and MEIS1 loci. Similarly, monoubiquitination at Lys-121 (H2BK120Ub) by the RNF20/40 complex gives a specific tag for epigenetic transcriptional activation and is also prerequisite for histone H3 'Lys-4' and 'Lys-79' methylation. It also functions cooperatively with the FACT dimer to stimulate elongation by RNA polymerase II. H2BK120Ub also acts as a regulator of mRNA splicing: deubiquitination by USP49 is required for efficient cotranscriptional splicing of a large set of exons. In terms of processing, phosphorylated on Ser-15 (H2BS14ph) by STK4/MST1 during apoptosis; which facilitates apoptotic chromatin condensation. Also phosphorylated on Ser-15 in response to DNA double strand breaks (DSBs), and in correlation with somatic hypermutation and immunoglobulin class-switch recombination. Phosphorylation at Ser-37 (H2BS36ph) by AMPK in response to stress promotes transcription. GlcNAcylation at Ser-113 promotes monoubiquitination of Lys-121. It fluctuates in response to extracellular glucose, and associates with transcribed genes. Post-translationally, ADP-ribosylated by PARP1 or PARP2 on Ser-7 (H2BS6ADPr) in response to DNA damage. H2BS6ADPr promotes recruitment of CHD1L. Mono-ADP-ribosylated on Glu-3 (H2BE2ADPr) by PARP3 in response to single-strand breaks. Poly ADP-ribosylation on Glu-36 (H2BE35ADPr) by PARP1 regulates adipogenesis: it inhibits phosphorylation at Ser-37 (H2BS36ph), thereby blocking expression of pro-adipogenetic genes. In terms of processing, crotonylation (Kcr) is specifically present in male germ cells and marks testis-specific genes in post-meiotic cells, including X-linked genes that escape sex chromosome inactivation in haploid cells. Crotonylation marks active promoters and enhancers and confers resistance to transcriptional repressors. It is also associated with post-meiotically activated genes on autosomes. Hydroxybutyrylation of histones is induced by starvation. Post-translationally, lactylated in macrophages by EP300/P300 by using lactoyl-CoA directly derived from endogenous or exogenous lactate, leading to stimulates gene transcription.

It is found in the nucleus. It localises to the chromosome. Its function is as follows. Core component of nucleosome. Nucleosomes wrap and compact DNA into chromatin, limiting DNA accessibility to the cellular machineries which require DNA as a template. Histones thereby play a central role in transcription regulation, DNA repair, DNA replication and chromosomal stability. DNA accessibility is regulated via a complex set of post-translational modifications of histones, also called histone code, and nucleosome remodeling. This Mus musculus (Mouse) protein is Histone H2B type 1-C/E/G.